Consider the following 374-residue polypeptide: UPF0754 membrane protein SAR1937 (374 aa).

A run of 2 helical transmembrane segments spans residues Leu-4 to Ile-24 and Ser-354 to Val-374.

This sequence belongs to the UPF0754 family.

It is found in the cell membrane. In Staphylococcus aureus (strain MRSA252), this protein is UPF0754 membrane protein SAR1937.